The chain runs to 362 residues: Ferredoxin--NADP reductase, leaf isozyme 1, chloroplastic (362 aa).

The transit peptide at 1–36 (MAAVTAAAVSTSAAAAVTKASPSPAHCFLPCPPRTR) directs the protein to the chloroplast. The FAD-binding FR-type domain maps to 83–205 (KEPYVGKCLL…TGPVGKEMLM (123 aa)). FAD is bound by residues 141-144 (RLYS), 162-164 (CVK), Tyr-168, 179-181 (VCS), and Thr-220. Residues Ser-144 and Lys-164 each coordinate NADP(+). Cys-180 and Cys-185 are oxidised to a cystine. Position 181 is a phosphoserine (Ser-181). Residues Thr-220, 252–253 (VP), 282–283 (SR), Lys-292, 321–322 (GL), and Glu-360 contribute to the NADP(+) site.

Belongs to the ferredoxin--NADP reductase type 1 family. In terms of assembly, heterodimer with LFNR2. Component of high molecular weight thylakoid LFNRs-containing protein complexes containing LIR1, LFNR1, LFNR2, TIC62 and TROL proteins. Interacts directly with LFNR1 and LFNR2; LIR1 increases the affinity of LFNR1 and LFNR2 for TIC62 and subsequent thylakoid relocalization. FAD serves as cofactor. May form interchain disulfide bonds with LIR1.

It localises to the plastid. The protein resides in the chloroplast stroma. It is found in the chloroplast thylakoid membrane. The catalysed reaction is 2 reduced [2Fe-2S]-[ferredoxin] + NADP(+) + H(+) = 2 oxidized [2Fe-2S]-[ferredoxin] + NADPH. It functions in the pathway energy metabolism; photosynthesis. Functionally, plays a key role in regulating the relative amounts of cyclic and non-cyclic electron flow to meet the demands of the plant for ATP and reducing power. In Oryza sativa subsp. indica (Rice), this protein is Ferredoxin--NADP reductase, leaf isozyme 1, chloroplastic.